Consider the following 232-residue polypeptide: Ubiquinone biosynthesis O-methyltransferase (232 aa).

S-adenosyl-L-methionine-binding residues include Arg-36, Gly-55, Asp-76, and Met-120.

It belongs to the methyltransferase superfamily. UbiG/COQ3 family.

It carries out the reaction a 3-demethylubiquinol + S-adenosyl-L-methionine = a ubiquinol + S-adenosyl-L-homocysteine + H(+). The catalysed reaction is a 3-(all-trans-polyprenyl)benzene-1,2-diol + S-adenosyl-L-methionine = a 2-methoxy-6-(all-trans-polyprenyl)phenol + S-adenosyl-L-homocysteine + H(+). Its pathway is cofactor biosynthesis; ubiquinone biosynthesis. Its function is as follows. O-methyltransferase that catalyzes the 2 O-methylation steps in the ubiquinone biosynthetic pathway. This Burkholderia orbicola (strain MC0-3) protein is Ubiquinone biosynthesis O-methyltransferase.